The following is a 305-amino-acid chain: Phospho-N-acetylmuramoyl-pentapeptide-transferase (305 aa).

9 helical membrane-spanning segments follow: residues Met1–Lys21, Ala46–Gly66, Glu73–Leu93, Phe113–His133, Leu139–Phe159, Ile174–Leu194, Val207–Leu227, Leu233–Ile253, and Val282–Gly302.

This sequence belongs to the glycosyltransferase 4 family. MraY subfamily. It depends on Mg(2+) as a cofactor.

Its subcellular location is the cell membrane. It carries out the reaction UDP-N-acetyl-alpha-D-muramoyl-L-alanyl-gamma-D-glutamyl-meso-2,6-diaminopimeloyl-D-alanyl-D-alanine + di-trans,octa-cis-undecaprenyl phosphate = di-trans,octa-cis-undecaprenyl diphospho-N-acetyl-alpha-D-muramoyl-L-alanyl-D-glutamyl-meso-2,6-diaminopimeloyl-D-alanyl-D-alanine + UMP. It participates in cell wall biogenesis; peptidoglycan biosynthesis. Functionally, catalyzes the initial step of the lipid cycle reactions in the biosynthesis of the cell wall peptidoglycan: transfers peptidoglycan precursor phospho-MurNAc-pentapeptide from UDP-MurNAc-pentapeptide onto the lipid carrier undecaprenyl phosphate, yielding undecaprenyl-pyrophosphoryl-MurNAc-pentapeptide, known as lipid I. The sequence is that of Phospho-N-acetylmuramoyl-pentapeptide-transferase from Deinococcus deserti (strain DSM 17065 / CIP 109153 / LMG 22923 / VCD115).